We begin with the raw amino-acid sequence, 688 residues long: Probable glucan endo-1,3-beta-glucosidase btgC (688 aa).

Disordered stretches follow at residues Met-1–Pro-91, Ala-126–Pro-148, and Gly-168–Gln-195. The Cytoplasmic portion of the chain corresponds to Met-1–Arg-307. Residues Ser-175–Asn-188 show a composition bias toward polar residues. The helical; Signal-anchor for type II membrane protein transmembrane segment at Gly-308–Val-328 threads the bilayer. Residues Gly-329–Thr-688 are Extracellular-facing. Residues His-334 to Asp-363 are disordered. Positions Ser-341–Thr-355 are enriched in low complexity. N-linked (GlcNAc...) asparagine glycans are attached at residues Asn-408, Asn-431, and Asn-459. The Proton donor role is filled by Glu-491. Glu-590 acts as the Nucleophile in catalysis. 2 N-linked (GlcNAc...) asparagine glycosylation sites follow: Asn-609 and Asn-635.

The protein belongs to the glycosyl hydrolase 17 family.

It localises to the cell membrane. The catalysed reaction is Hydrolysis of (1-&gt;3)-beta-D-glucosidic linkages in (1-&gt;3)-beta-D-glucans.. Functionally, glucanases play a role in cell expansion during growth, in cell-cell fusion during mating, and in spore release during sporulation. This enzyme may be involved in beta-glucan degradation. Active on laminarin and lichenan. This is Probable glucan endo-1,3-beta-glucosidase btgC (btgC) from Aspergillus fumigatus (strain ATCC MYA-4609 / CBS 101355 / FGSC A1100 / Af293) (Neosartorya fumigata).